Consider the following 239-residue polypeptide: Homeobox-leucine zipper protein HOX12 (239 aa).

The tract at residues 25–65 is disordered; it reads ATSGGEQKKARQRRRRKVKPEAAAALAGESGGDEQAKKRRL. A DNA-binding region (homeobox) is located at residues 58 to 117; it reads EQAKKRRLSDEQARFLEMSFKKERKLETPRKVQLAAELGLDAKQVAVWFQNRRARHKSKL. Residues 107–168 are a coiled coil; that stretch reads QNRRARHKSK…KLAAVAAATT (62 aa).

This sequence belongs to the HD-ZIP homeobox family. Class I subfamily. Expressed in seedlings, roots, stems, leaf sheaths and panicles.

It is found in the nucleus. Its function is as follows. Probable transcription factor. The sequence is that of Homeobox-leucine zipper protein HOX12 (HOX12) from Oryza sativa subsp. japonica (Rice).